A 640-amino-acid chain; its full sequence is Threonine--tRNA ligase (640 aa).

One can recognise a TGS domain in the interval 1–60; it reads MKITFPDGAVKEFEPGVSTADIAASISPGLKKKALAGKLNGELLDLVTPIHEDGAIEIVT. The catalytic stretch occupies residues 241-538; it reads DHRKLGKELD…LIEEYKGAFP (298 aa). Zn(2+) is bound by residues cysteine 334, histidine 385, and histidine 515.

This sequence belongs to the class-II aminoacyl-tRNA synthetase family. Homodimer. The cofactor is Zn(2+).

Its subcellular location is the cytoplasm. The catalysed reaction is tRNA(Thr) + L-threonine + ATP = L-threonyl-tRNA(Thr) + AMP + diphosphate + H(+). In terms of biological role, catalyzes the attachment of threonine to tRNA(Thr) in a two-step reaction: L-threonine is first activated by ATP to form Thr-AMP and then transferred to the acceptor end of tRNA(Thr). Also edits incorrectly charged L-seryl-tRNA(Thr). The sequence is that of Threonine--tRNA ligase from Listeria monocytogenes serotype 4b (strain CLIP80459).